Here is a 342-residue protein sequence, read N- to C-terminus: N-acetyl-gamma-glutamyl-phosphate reductase (342 aa).

Cysteine 149 is a catalytic residue.

This sequence belongs to the NAGSA dehydrogenase family. Type 1 subfamily.

It localises to the cytoplasm. It carries out the reaction N-acetyl-L-glutamate 5-semialdehyde + phosphate + NADP(+) = N-acetyl-L-glutamyl 5-phosphate + NADPH + H(+). It participates in amino-acid biosynthesis; L-arginine biosynthesis; N(2)-acetyl-L-ornithine from L-glutamate: step 3/4. Catalyzes the NADPH-dependent reduction of N-acetyl-5-glutamyl phosphate to yield N-acetyl-L-glutamate 5-semialdehyde. The polypeptide is N-acetyl-gamma-glutamyl-phosphate reductase (Nitrosomonas eutropha (strain DSM 101675 / C91 / Nm57)).